The primary structure comprises 490 residues: 7-ethoxycoumarin O-deethylase (490 aa).

Heme is bound at residue C432.

The protein belongs to the cytochrome P450 family. Heme serves as cofactor.

Functionally, capable of dealkylating a model xenobiotic compound, 7-ethoxycoumarin. Metabolizes with high efficiency a wide range of xenobiotics, including alkoxycoumarins, alkoxyresorufins, and several herbicides of the class of phenylureas. Catalyzes the double N-dealkylation (oxidative N-demethylation) of phenylureas such as chlortoluron and isoproturon with turnover rates comparable to those reported for physiological substrates and produces non-phytotoxic compounds. Could be used for control of herbicide tolerance and selectivity, as well as soil and groundwater bioremediation. The chain is 7-ethoxycoumarin O-deethylase (CYP76B1) from Helianthus tuberosus (Jerusalem artichoke).